A 198-amino-acid polypeptide reads, in one-letter code: Probable chemoreceptor glutamine deamidase CheD (198 aa).

This sequence belongs to the CheD family.

It carries out the reaction L-glutaminyl-[protein] + H2O = L-glutamyl-[protein] + NH4(+). Probably deamidates glutamine residues to glutamate on methyl-accepting chemotaxis receptors (MCPs), playing an important role in chemotaxis. This chain is Probable chemoreceptor glutamine deamidase CheD, found in Xanthomonas euvesicatoria pv. vesicatoria (strain 85-10) (Xanthomonas campestris pv. vesicatoria).